Reading from the N-terminus, the 444-residue chain is Orexin receptor type 2 (444 aa).

A compositionally biased stretch (basic and acidic residues) spans 1–10 (MSGTKLEDSP). Residues 1 to 20 (MSGTKLEDSPPCRNWSSASE) form a disordered region. Topologically, residues 1–54 (MSGTKLEDSPPCRNWSSASELNETQEPFLNPTDYDDEEFLRYLWREYLHPKEYE) are extracellular. Residues Asn14 and Asn22 are each glycosylated (N-linked (GlcNAc...) asparagine). Residues 33–49 (DYDDEEFLRYLWREYLH) are required for response to orexin-A. Residues 55–75 (WVLIAGYIIVFVVALIGNVLV) form a helical membrane-spanning segment. Topologically, residues 76–88 (CVAVWKNHHMRTV) are cytoplasmic. Residues 89 to 110 (TNYFIVNLSLADVLVTITCLPA) form a helical membrane-spanning segment. Topologically, residues 111–127 (TLVVDITETWFFGQSLC) are extracellular. Cys127 and Cys210 are disulfide-bonded. The chain crosses the membrane as a helical span at residues 128-150 (KVIPYLQTVSVSVSVLTLSCIAL). Residues 151–170 (DRWYAICHPLMFKSTAKRAR) lie on the Cytoplasmic side of the membrane. A helical membrane pass occupies residues 171-191 (NSIVIIWIVSCIIMIPQAIVM). Residues 192-222 (ECSTVFPGLANKTTLFTVCDERWGGEIYPKM) are Extracellular-facing. A glycan (N-linked (GlcNAc...) asparagine) is linked at Asn202. Residues 223–243 (YHICFFLVTYMAPLCLMVLAY) form a helical membrane-spanning segment. The Cytoplasmic segment spans residues 244-304 (LQIFRKLWCR…QIRARRKTAR (61 aa)). A helical transmembrane segment spans residues 305-326 (MLMIVLLVFAICYLPISILNVL). Asn324 contacts suvorexant. Over 327–342 (KRVFGMFAHTEDRETV) the chain is Extracellular. The chain crosses the membrane as a helical span at residues 343–366 (YAWFTFSHWLVYANSAANPIIYNF). Topologically, residues 367–444 (LSGKFREEFK…ANGAGPLQNW (78 aa)) are cytoplasmic.

It belongs to the G-protein coupled receptor 1 family.

The protein resides in the cell membrane. Nonselective, high-affinity receptor for both orexin-A and orexin-B neuropeptides. Triggers an increase in cytoplasmic Ca(2+) levels in response to orexin-A binding. The sequence is that of Orexin receptor type 2 (HCRTR2) from Homo sapiens (Human).